The primary structure comprises 95 residues: Large ribosomal subunit protein bL21 (95 aa).

It belongs to the bacterial ribosomal protein bL21 family. In terms of assembly, part of the 50S ribosomal subunit. Contacts protein L20.

Functionally, this protein binds to 23S rRNA in the presence of protein L20. This Prosthecochloris vibrioformis (Chlorobium vibrioforme) protein is Large ribosomal subunit protein bL21.